A 312-amino-acid chain; its full sequence is tRNA dimethylallyltransferase (312 aa).

Position 17 to 24 (17 to 24 (GPTASGKT)) interacts with ATP. 19–24 (TASGKT) lines the substrate pocket. Interaction with substrate tRNA regions lie at residues 42–45 (DSAL), 166–170 (QRLLR), and 247–252 (RCVGYR).

The protein belongs to the IPP transferase family. In terms of assembly, monomer. Mg(2+) is required as a cofactor.

It carries out the reaction adenosine(37) in tRNA + dimethylallyl diphosphate = N(6)-dimethylallyladenosine(37) in tRNA + diphosphate. In terms of biological role, catalyzes the transfer of a dimethylallyl group onto the adenine at position 37 in tRNAs that read codons beginning with uridine, leading to the formation of N6-(dimethylallyl)adenosine (i(6)A). The polypeptide is tRNA dimethylallyltransferase (Sodalis glossinidius (strain morsitans)).